We begin with the raw amino-acid sequence, 514 residues long: Ankyrin repeat domain-containing protein 34B (514 aa).

4 ANK repeats span residues 9-38, 42-79, 83-113, and 117-146; these read SEGN…YINE, RGET…DPNI, SGKT…DLSL, and SSYS…AKGK. Positions 220-249 are disordered; sequence NDDTWDPGSPVRKPALAPKGPKLPHAPPWV. At serine 263 the chain carries Phosphoserine. At threonine 272 the chain carries Phosphothreonine. Phosphoserine is present on serine 296.

This sequence belongs to the ANKRD34 family. In terms of processing, phosphorylated.

Its subcellular location is the cytoplasm. The protein localises to the nucleus. The chain is Ankyrin repeat domain-containing protein 34B (ANKRD34B) from Homo sapiens (Human).